Reading from the N-terminus, the 89-residue chain is UPF0335 protein Nwi_0989 (89 aa).

This sequence belongs to the UPF0335 family.

In Nitrobacter winogradskyi (strain ATCC 25391 / DSM 10237 / CIP 104748 / NCIMB 11846 / Nb-255), this protein is UPF0335 protein Nwi_0989.